A 98-amino-acid chain; its full sequence is Beta-elicitin cinnamomin (98 aa).

3 disulfides stabilise this stretch: C3-C71, C27-C56, and C51-C95. Positions 33-42 match the Beak-like motif 1 (ligand binding) motif; it reads YSMLTATALP. The Beak-like motif 2 (ligand binding) signature appears at 72–83; that stretch reads DLTVPTSGLVLD.

This sequence belongs to the elicitin family.

Its subcellular location is the secreted. Its function is as follows. Induces local and distal defense responses (incompatible hypersensitive reaction) in plants from the solanaceae and cruciferae families. Elicits leaf necrosis and causes the accumulation of pathogenesis-related proteins. Might interact with the lipidic molecules of the plasma membrane. Elicitins are able to load, carry, and transfer sterols between membranes. This Phytophthora cinnamomi (Cinnamon fungus) protein is Beta-elicitin cinnamomin.